The sequence spans 960 residues: CWF19-like protein 2 (960 aa).

Disordered stretches follow at residues 1–222 (MAAY…AGVV), 261–552 (EFQK…ELIL), 624–648 (AWPV…AIET), and 712–731 (AQKE…AVQE). A coiled-coil region spans residues 13-101 (SIKSRKESKR…KKAKKEKKDE (89 aa)). Residues 16–52 (SRKESKREERERVIQKAKEKFEKEERRKAERKARGED) show a composition bias toward basic and acidic residues. Positions 73–96 (KTKKAKKEKKAKKSKKEKKKKAKK) are enriched in basic residues. Over residues 108–117 (SSEDSEDEWV) the composition is skewed to acidic residues. Residues 135–146 (EATPSSSSASNN) show a composition bias toward low complexity. Residues 163–279 (SVADRRAQKE…EDAAYGERRD (117 aa)) adopt a coiled-coil conformation. 3 stretches are compositionally biased toward basic and acidic residues: residues 165–181 (ADRR…ERQK), 261–372 (EFQK…DDLS), and 404–417 (KPVD…EAGF). Residues 507–518 (SAVQDSETPTLQ) show a composition bias toward polar residues. Residues 540-605 (SESEEEEEEE…IKDQSKRASK (66 aa)) adopt a coiled-coil conformation. A compositionally biased stretch (acidic residues) spans 541–552 (ESEEEEEEELIL). Over residues 713–731 (QKERAGRDEERQRNKAVQE) the composition is skewed to basic and acidic residues.

This sequence belongs to the CWF19 family.

The chain is CWF19-like protein 2 (cwf19l2) from Danio rerio (Zebrafish).